We begin with the raw amino-acid sequence, 542 residues long: MTTQTPSLPNKPETLPTNTLDKSLDRQMIVILDFGSQYSELIARRIRETQVYSEVLSYRTTAQKLRQLNPKGIILSGGPNSVYDDRAPQCDPDIWQLGIPVLGVCYGMQLMVKQLGGQVEKALRGEYGKASLRIDDPTDLLTNVEDGSTMWMSHGDSCTRLPEGFSILAHTENTLCAAIADHDKKLFGVQFHPEVVHSVDGIALIRNFVYHICECEPTWTTEAFVDETIREIRAKVRDKRVLLALSGGVDSSTLAFLLHQAIGDNLTCMFIDQGFMRKGEPERLMDIFDKQFHIPVEYVNARDRFLKQLEGVTDPEKKRRLIGHEFIQVFEEESKRLGPFDYLAQGTLYPDVIESADTNIDPKTGERVAVKIKSHHNVGGLPKDLRFKLVEPLRKLFKDEVRKVGRSIGLPEEIVRRHPFPGPGLAIRIIGEVTSERLNILRDADFVVRDEIGKQGMYHDFWQAFAVLLPIRSVGVMGDQRTYAHPIVLRLISSEDGMTADWSRVPYDLLETISNRIVNEVKGVNRVVYDITSKPPGTIEWE.

Residues 28-218 (MIVILDFGSQ…VYHICECEPT (191 aa)) form the Glutamine amidotransferase type-1 domain. Cys-105 serves as the catalytic Nucleophile. Residues His-192 and Glu-194 contribute to the active site. The 199-residue stretch at 219–417 (WTTEAFVDET…IGLPEEIVRR (199 aa)) folds into the GMPS ATP-PPase domain. ATP is bound at residue 246–252 (SGGVDSS).

Homodimer.

It carries out the reaction XMP + L-glutamine + ATP + H2O = GMP + L-glutamate + AMP + diphosphate + 2 H(+). The protein operates within purine metabolism; GMP biosynthesis; GMP from XMP (L-Gln route): step 1/1. Its function is as follows. Catalyzes the synthesis of GMP from XMP. This chain is GMP synthase [glutamine-hydrolyzing], found in Crocosphaera subtropica (strain ATCC 51142 / BH68) (Cyanothece sp. (strain ATCC 51142)).